A 493-amino-acid chain; its full sequence is Glutamate--tRNA ligase (493 aa).

The 'HIGH' region motif lies at 10 to 20 (PSPTGDPHVGT). The short motif at 251–255 (KLSKR) is the 'KMSKS' region element. Residue Lys254 participates in ATP binding.

The protein belongs to the class-I aminoacyl-tRNA synthetase family. Glutamate--tRNA ligase type 1 subfamily. Monomer.

It is found in the cytoplasm. It catalyses the reaction tRNA(Glu) + L-glutamate + ATP = L-glutamyl-tRNA(Glu) + AMP + diphosphate. In terms of biological role, catalyzes the attachment of glutamate to tRNA(Glu) in a two-step reaction: glutamate is first activated by ATP to form Glu-AMP and then transferred to the acceptor end of tRNA(Glu). The sequence is that of Glutamate--tRNA ligase from Pseudomonas savastanoi pv. phaseolicola (strain 1448A / Race 6) (Pseudomonas syringae pv. phaseolicola (strain 1448A / Race 6)).